Here is a 288-residue protein sequence, read N- to C-terminus: Transposase InsF for insertion sequence IS3A (288 aa).

Positions 124 to 287 (YASGPNQKWA…SPEQFENKNL (164 aa)) constitute an Integrase catalytic domain.

This sequence belongs to the transposase IS3/IS150/IS904 family.

In terms of biological role, involved in the transposition of the insertion sequence IS3. The sequence is that of Transposase InsF for insertion sequence IS3A (insF1) from Escherichia coli (strain K12).